An 84-amino-acid chain; its full sequence is Small ribosomal subunit protein eS27 (84 aa).

Basic and acidic residues predominate over residues 1-16; sequence MPLAKDLLHPTPEEEK. Residues 1 to 23 are disordered; the sequence is MPLAKDLLHPTPEEEKRKHKKKR. The segment at 37–59 adopts a C4-type zinc-finger fold; that stretch reads CPGCYKITTVFSHAQTVVLCVGC.

Belongs to the eukaryotic ribosomal protein eS27 family. As to quaternary structure, component of the small ribosomal subunit. Part of the small subunit (SSU) processome, composed of more than 70 proteins and the RNA chaperone small nucleolar RNA (snoRNA) U3. The cofactor is Zn(2+).

It is found in the cytoplasm. Its subcellular location is the nucleus. The protein localises to the nucleolus. In terms of biological role, component of the small ribosomal subunit. The ribosome is a large ribonucleoprotein complex responsible for the synthesis of proteins in the cell. Required for proper rRNA processing and maturation of 18S rRNAs. Part of the small subunit (SSU) processome, first precursor of the small eukaryotic ribosomal subunit. During the assembly of the SSU processome in the nucleolus, many ribosome biogenesis factors, an RNA chaperone and ribosomal proteins associate with the nascent pre-rRNA and work in concert to generate RNA folding, modifications, rearrangements and cleavage as well as targeted degradation of pre-ribosomal RNA by the RNA exosome. In Xenopus laevis (African clawed frog), this protein is Small ribosomal subunit protein eS27 (rps27).